Consider the following 310-residue polypeptide: Vomeronasal type-1 receptor 90 (310 aa).

Residues 1–20 are Extracellular-facing; sequence MRRISTLYGVVDKQAIFFSE. The helical transmembrane segment at 21 to 41 threads the bilayer; the sequence is VVIGISFNSILFLFHIFQFLL. Topologically, residues 42–46 are cytoplasmic; the sequence is ERRLR. A helical transmembrane segment spans residues 47 to 67; it reads ITDLIISLLALIHLGMLTVMG. Residues 68–93 are Extracellular-facing; it reads FRAVDIFASQNVWNDIKCKSLAHLHR. Cysteines 85 and 172 form a disulfide. A helical transmembrane segment spans residues 94-114; it reads LLRGLSLCATCLLSIFQAITL. Residues 115-135 are Cytoplasmic-facing; it reads SPRSSCLAKFKYKSTQHSLCS. Residues 136–156 form a helical membrane-spanning segment; it reads LLVLWAFYMSCGTHYSFTIVA. The Extracellular portion of the chain corresponds to 157-183; it reads DYNFSSRSLIFVTESCIILPMDYITRH. A glycan (N-linked (GlcNAc...) asparagine) is linked at Asn159. The chain crosses the membrane as a helical span at residues 184–204; the sequence is LFFILGIFRDVSFIGLMALSS. At 205 to 238 the chain is on the cytoplasmic side; that stretch reads GYMVALLCRHRKQAQHLHRTSLSPKASPEQRATR. Residues 239-259 traverse the membrane as a helical segment; that stretch reads TILLLMSFFVLMYCLDCTISA. Topologically, residues 260-271 are extracellular; the sequence is SRLMHNGEPIHH. A helical membrane pass occupies residues 272-292; it reads SIQMMVSNSYATLSPLLLIVT. Residues 293–310 are Cytoplasmic-facing; that stretch reads ENRISRFLKSLLGRTVDA.

Belongs to the G-protein coupled receptor 1 family. As to expression, expressed in 1-4% of neurons of the vomeronasal organ. Only one pheromone receptor gene may be expressed in a particular neuron. Not expressed in the main olfactory epithelium.

It localises to the cell membrane. Putative pheromone receptor implicated in the regulation of social as well as reproductive behavior. The chain is Vomeronasal type-1 receptor 90 (Vom1r90) from Rattus norvegicus (Rat).